A 371-amino-acid chain; its full sequence is Chaperone protein DnaJ (371 aa).

One can recognise a J domain in the interval 5–69 (DYYEVLGLSK…QKRAQYDQFG (65 aa)). The CR-type zinc finger occupies 133–215 (GKELNVEIPV…CHGSGKVRKR (83 aa)). Zn(2+) is bound by residues cysteine 146, cysteine 149, cysteine 163, cysteine 166, cysteine 189, cysteine 192, cysteine 203, and cysteine 206. CXXCXGXG motif repeat units follow at residues 146 to 153 (CDTCKGSG), 163 to 170 (CKHCSGSG), 189 to 196 (CGHCSGTG), and 203 to 210 (CTTCHGSG).

It belongs to the DnaJ family. In terms of assembly, homodimer. It depends on Zn(2+) as a cofactor.

Its subcellular location is the cytoplasm. Functionally, participates actively in the response to hyperosmotic and heat shock by preventing the aggregation of stress-denatured proteins and by disaggregating proteins, also in an autonomous, DnaK-independent fashion. Unfolded proteins bind initially to DnaJ; upon interaction with the DnaJ-bound protein, DnaK hydrolyzes its bound ATP, resulting in the formation of a stable complex. GrpE releases ADP from DnaK; ATP binding to DnaK triggers the release of the substrate protein, thus completing the reaction cycle. Several rounds of ATP-dependent interactions between DnaJ, DnaK and GrpE are required for fully efficient folding. Also involved, together with DnaK and GrpE, in the DNA replication of plasmids through activation of initiation proteins. The chain is Chaperone protein DnaJ from Bacillus cereus (strain G9842).